The following is a 129-amino-acid chain: Profilin-4 (129 aa).

It belongs to the profilin family. In terms of tissue distribution, expressed in testis, in seminiferous tubules (at protein level). Expressed in spermatocytes and spermatids, but not in spermatogonium.

Its subcellular location is the cytoplasm. Functionally, involved in male fertility. Required for manchette development and acrosome biogenesis during spermiogenesis. Binds in vitro to phospholipids, including phosphatidylinositol 3-phosphate (PtdIns(3)P), phosphatidylinositol 4,5-bisphosphate (PtdIns(4,5)P2), phosphatidylinositol 4-phosphate (PtdIns(4)P) and phosphatidic acid (PA). Contrary to other profilin family members, does not bind to actin in vitro. In Rattus norvegicus (Rat), this protein is Profilin-4 (Pfn4).